A 267-amino-acid chain; its full sequence is Proenkephalin-A (267 aa).

A signal peptide spans 1-24; the sequence is MARFLTLCTWLLLLGPGLLATVRA. 3 disulfides stabilise this stretch: Cys26/Cys48, Cys30/Cys52, and Cys33/Cys65. Residues 163–175 show a composition bias toward basic and acidic residues; the sequence is TGDNRERSHHQDG. Residues 163–182 are disordered; it reads TGDNRERSHHQDGSDNEEEV. 2 consecutive propeptides follow at residues 196-207 and 217-227; these read SPQLEDEAKELQ and VGRPEWWMDYQ. Ser251 bears the Phosphoserine mark.

This sequence belongs to the opioid neuropeptide precursor family. Post-translationally, proenkephalin-A is cleaved by CTSL to generate Met-enkephalin. In terms of processing, processed and degraded by ACE. Probably cleaved by ACE. Post-translationally, processed by ACE to generate Met-enkephalin in the nucleus accumbens of the brain. In terms of processing, the N-terminal domain contains 6 conserved cysteines thought to be involved in disulfide bonding and/or processing.

It localises to the cytoplasmic vesicle. The protein resides in the secretory vesicle. Its subcellular location is the chromaffin granule lumen. The protein localises to the secreted. Its function is as follows. Neuropeptide that competes with and mimic the effects of opiate drugs. They play a role in a number of physiologic functions, including pain perception and responses to stress. In terms of biological role, met-enkephalin-Arg-Phe neuropeptide acts as a strong ligand of Mu-type opioid receptor OPRM1. Met-enkephalin-Arg-Phe-binding to OPRM1 in the nucleus accumbens of the brain increases activation of OPRM1, leading to long-term synaptic depression of glutamate release. Increases glutamate release in the striatum and decreases GABA concentration in the striatum. Functionally, increases glutamate release in the striatum. The polypeptide is Proenkephalin-A (Homo sapiens (Human)).